A 224-amino-acid chain; its full sequence is COMM domain-containing protein 5 (224 aa).

Ser-2 carries the post-translational modification N-acetylserine. The 65-residue stretch at 151 to 215 folds into the COMM domain; the sequence is HIADFRWRVD…LVLKEMADLE (65 aa).

It belongs to the COMM domain-containing protein 5 family. Component of the commander complex consisting of the CCC subcomplex and the retriever subcomplex. Component of the CCC (COMMD/CCDC22/CCDC93) subcomplex consisting of COMMD1, COMMD2, COMMD3, COMMD4, COMMD5, COMMD6, COMMD7, COMMD8, COMMD9, COMMD10, CCDC22 and CCDC93; within the complex forms a heterodimer with COMMD10. Interacts (via COMM domain) with COMMD1 (via COMM domain). Interacts with RELA, RELB, NFKB1/p105. Interacts with CCDC22, CCDC93, SCNN1B, CUL2, CUL3, CUL4A, CUL4B, CUL7.

Its subcellular location is the nucleus. The protein resides in the cytoplasm. In terms of biological role, scaffold protein in the commander complex that is essential for endosomal recycling of transmembrane cargos; the commander complex is composed of the CCC subcomplex and the retriever subcomplex. May modulate activity of cullin-RING E3 ubiquitin ligase (CRL) complexes. Negatively regulates cell proliferation. Negatively regulates cell cycle G2/M phase transition probably by transactivating p21/CDKN1A through the p53/TP53-independent signaling pathway. Involved in kidney proximal tubule morphogenesis. Down-regulates activation of NF-kappa-B. The polypeptide is COMM domain-containing protein 5 (COMMD5) (Bos taurus (Bovine)).